We begin with the raw amino-acid sequence, 306 residues long: Extensin (306 aa).

Positions Met-1–Ala-32 are cleaved as a signal peptide. A disordered region spans residues Lys-33 to Tyr-306. Composition is skewed to pro residues over residues Ser-38–Ser-122, Ser-133–Ser-152, Ser-183–Ser-214, and Ser-225–Pro-290.

Hydroxylated on proline residues in the S-P-P-P-P repeat. In terms of processing, O-glycosylated on hydroxyprolines.

The protein localises to the secreted. It localises to the primary cell wall. Its function is as follows. Structural component in primary cell wall. The chain is Extensin from Daucus carota (Wild carrot).